Reading from the N-terminus, the 79-residue chain is Acyl carrier protein (79 aa).

The Carrier domain occupies 2 to 77 (SDVAERVKKI…DAVNFLEKAT (76 aa)). Serine 37 is subject to O-(pantetheine 4'-phosphoryl)serine.

This sequence belongs to the acyl carrier protein (ACP) family. Post-translationally, 4'-phosphopantetheine is transferred from CoA to a specific serine of apo-ACP by AcpS. This modification is essential for activity because fatty acids are bound in thioester linkage to the sulfhydryl of the prosthetic group.

It localises to the cytoplasm. It functions in the pathway lipid metabolism; fatty acid biosynthesis. In terms of biological role, carrier of the growing fatty acid chain in fatty acid biosynthesis. The polypeptide is Acyl carrier protein (Methylocella silvestris (strain DSM 15510 / CIP 108128 / LMG 27833 / NCIMB 13906 / BL2)).